A 75-amino-acid polypeptide reads, in one-letter code: Small ribosomal subunit protein bS18 (75 aa).

The protein belongs to the bacterial ribosomal protein bS18 family. As to quaternary structure, part of the 30S ribosomal subunit. Forms a tight heterodimer with protein bS6.

Functionally, binds as a heterodimer with protein bS6 to the central domain of the 16S rRNA, where it helps stabilize the platform of the 30S subunit. In Chromobacterium violaceum (strain ATCC 12472 / DSM 30191 / JCM 1249 / CCUG 213 / NBRC 12614 / NCIMB 9131 / NCTC 9757 / MK), this protein is Small ribosomal subunit protein bS18.